The sequence spans 212 residues: Small ribosomal subunit protein uS4c (212 aa).

The 64-residue stretch at 89 to 152 (MRLDNIIFRL…RSRALVDKNL (64 aa)) folds into the S4 RNA-binding domain.

The protein belongs to the universal ribosomal protein uS4 family. In terms of assembly, part of the 30S ribosomal subunit. Contacts protein S5. The interaction surface between S4 and S5 is involved in control of translational fidelity.

The protein resides in the plastid. The protein localises to the chloroplast. Functionally, one of the primary rRNA binding proteins, it binds directly to 16S rRNA where it nucleates assembly of the body of the 30S subunit. Its function is as follows. With S5 and S12 plays an important role in translational accuracy. This Staurastrum punctulatum (Green alga) protein is Small ribosomal subunit protein uS4c (rps4).